A 728-amino-acid polypeptide reads, in one-letter code: Catalase-peroxidase 1 (728 aa).

Residues 91–218 (WHGAGTYRIA…LAAVQMGLIY (128 aa)) constitute a cross-link (tryptophyl-tyrosyl-methioninium (Trp-Tyr) (with M-244)). H92 (proton acceptor) is an active-site residue. A cross-link (tryptophyl-tyrosyl-methioninium (Tyr-Met) (with W-91)) is located at residues 218–244 (YVNPEGPDGKPDPVAAARDIRDTFARM). H259 contacts heme b.

The protein belongs to the peroxidase family. Peroxidase/catalase subfamily. In terms of assembly, homodimer or homotetramer. Heme b serves as cofactor. In terms of processing, formation of the three residue Trp-Tyr-Met cross-link is important for the catalase, but not the peroxidase activity of the enzyme.

The catalysed reaction is H2O2 + AH2 = A + 2 H2O. It catalyses the reaction 2 H2O2 = O2 + 2 H2O. In terms of biological role, bifunctional enzyme with both catalase and broad-spectrum peroxidase activity. This chain is Catalase-peroxidase 1, found in Burkholderia vietnamiensis (strain G4 / LMG 22486) (Burkholderia cepacia (strain R1808)).